Here is a 185-residue protein sequence, read N- to C-terminus: Elongation factor P (185 aa).

This sequence belongs to the elongation factor P family.

It localises to the cytoplasm. It participates in protein biosynthesis; polypeptide chain elongation. Its function is as follows. Involved in peptide bond synthesis. Stimulates efficient translation and peptide-bond synthesis on native or reconstituted 70S ribosomes in vitro. Probably functions indirectly by altering the affinity of the ribosome for aminoacyl-tRNA, thus increasing their reactivity as acceptors for peptidyl transferase. In Tropheryma whipplei (strain TW08/27) (Whipple's bacillus), this protein is Elongation factor P.